The chain runs to 177 residues: MEVATLGGGCFWCTEAVYKRVKGVISVKPGYSGGHVPNPTYEDVCTDTTGHAEVVQITFDSSIISYREILEIFFEIHDPTTLNRQGNDVGTQYRSIILYHNEEQRKIAEEMIREVEKRIGKKVVTELKPFEVFYEAEDYHHDFYDKHKYNPYCRLVISPKVKKFMKLFPDKVKIHEG.

The active site involves Cys10.

Belongs to the MsrA Met sulfoxide reductase family.

The catalysed reaction is L-methionyl-[protein] + [thioredoxin]-disulfide + H2O = L-methionyl-(S)-S-oxide-[protein] + [thioredoxin]-dithiol. It carries out the reaction [thioredoxin]-disulfide + L-methionine + H2O = L-methionine (S)-S-oxide + [thioredoxin]-dithiol. In terms of biological role, has an important function as a repair enzyme for proteins that have been inactivated by oxidation. Catalyzes the reversible oxidation-reduction of methionine sulfoxide in proteins to methionine. This is Peptide methionine sulfoxide reductase MsrA from Saccharolobus solfataricus (strain ATCC 35092 / DSM 1617 / JCM 11322 / P2) (Sulfolobus solfataricus).